We begin with the raw amino-acid sequence, 183 residues long: Ferritin heavy polypeptide-like 17 (183 aa).

The Ferritin-like diiron domain maps to Q11–C160. 4 residues coordinate Fe cation: E28, H66, E108, and Q142.

Belongs to the ferritin family. In terms of tissue distribution, testis specific. Also expressed in several cancers.

In Homo sapiens (Human), this protein is Ferritin heavy polypeptide-like 17 (FTHL17).